A 384-amino-acid chain; its full sequence is 5-amino-6-(D-ribitylamino)uracil--L-tyrosine 4-hydroxyphenyl transferase 2 (384 aa).

Positions 53-286 (VSYVVNRNIY…IAISRVILHT (234 aa)) constitute a Radical SAM core domain. [4Fe-4S] cluster contacts are provided by C67, C71, and C74.

It belongs to the radical SAM superfamily. CofH family. Consists of two subunits, CofG and CofH. [4Fe-4S] cluster is required as a cofactor.

It carries out the reaction 5-amino-6-(D-ribitylamino)uracil + L-tyrosine + S-adenosyl-L-methionine = 5-amino-5-(4-hydroxybenzyl)-6-(D-ribitylimino)-5,6-dihydrouracil + 2-iminoacetate + 5'-deoxyadenosine + L-methionine + H(+). It functions in the pathway cofactor biosynthesis; coenzyme F0 biosynthesis. Its function is as follows. Catalyzes the radical-mediated synthesis of 5-amino-5-(4-hydroxybenzyl)-6-(D-ribitylimino)-5,6-dihydrouracil from 5-amino-6-(D-ribitylamino)uracil and L-tyrosine. The protein is 5-amino-6-(D-ribitylamino)uracil--L-tyrosine 4-hydroxyphenyl transferase 2 of Methanosarcina barkeri (strain Fusaro / DSM 804).